We begin with the raw amino-acid sequence, 620 residues long: Chaperone protein HscA homolog (620 aa).

The protein belongs to the heat shock protein 70 family.

Chaperone involved in the maturation of iron-sulfur cluster-containing proteins. Has a low intrinsic ATPase activity which is markedly stimulated by HscB. The sequence is that of Chaperone protein HscA homolog from Shewanella loihica (strain ATCC BAA-1088 / PV-4).